A 331-amino-acid polypeptide reads, in one-letter code: GTP 3',8-cyclase 2 (331 aa).

The 226-residue stretch at 9-234 folds into the Radical SAM core domain; the sequence is PFGRRITYLR…PSLARSGGPS (226 aa). Arg18 is a GTP binding site. Residues Cys25 and Cys29 each contribute to the [4Fe-4S] cluster site. Tyr31 serves as a coordination point for S-adenosyl-L-methionine. Cys32 serves as a coordination point for [4Fe-4S] cluster. Arg67 serves as a coordination point for GTP. Gly71 contacts S-adenosyl-L-methionine. Position 98 (Thr98) interacts with GTP. Ser122 provides a ligand contact to S-adenosyl-L-methionine. Lys159 contributes to the GTP binding site. Met193 is a binding site for S-adenosyl-L-methionine. The [4Fe-4S] cluster site is built by Cys257 and Cys260. 262 to 264 serves as a coordination point for GTP; that stretch reads RVR. Cys274 is a binding site for [4Fe-4S] cluster.

This sequence belongs to the radical SAM superfamily. MoaA family. Monomer and homodimer. [4Fe-4S] cluster is required as a cofactor.

It catalyses the reaction GTP + AH2 + S-adenosyl-L-methionine = (8S)-3',8-cyclo-7,8-dihydroguanosine 5'-triphosphate + 5'-deoxyadenosine + L-methionine + A + H(+). It participates in cofactor biosynthesis; molybdopterin biosynthesis. Catalyzes the cyclization of GTP to (8S)-3',8-cyclo-7,8-dihydroguanosine 5'-triphosphate. This is GTP 3',8-cyclase 2 (moaA2) from Pseudomonas aeruginosa (strain ATCC 15692 / DSM 22644 / CIP 104116 / JCM 14847 / LMG 12228 / 1C / PRS 101 / PAO1).